A 477-amino-acid chain; its full sequence is Bifunctional protein HldE (477 aa).

The tract at residues 1–318 (MKVNLPAFER…ENAVRGRAAT (318 aa)) is ribokinase. 195–198 (NLSE) is an ATP binding site. Asp264 is an active-site residue. A cytidylyltransferase region spans residues 344-477 (MTNGVFDILH…IKKIQTESEK (134 aa)).

It in the N-terminal section; belongs to the carbohydrate kinase PfkB family. In the C-terminal section; belongs to the cytidylyltransferase family. As to quaternary structure, homodimer.

The enzyme catalyses D-glycero-beta-D-manno-heptose 7-phosphate + ATP = D-glycero-beta-D-manno-heptose 1,7-bisphosphate + ADP + H(+). The catalysed reaction is D-glycero-beta-D-manno-heptose 1-phosphate + ATP + H(+) = ADP-D-glycero-beta-D-manno-heptose + diphosphate. Its pathway is nucleotide-sugar biosynthesis; ADP-L-glycero-beta-D-manno-heptose biosynthesis; ADP-L-glycero-beta-D-manno-heptose from D-glycero-beta-D-manno-heptose 7-phosphate: step 1/4. The protein operates within nucleotide-sugar biosynthesis; ADP-L-glycero-beta-D-manno-heptose biosynthesis; ADP-L-glycero-beta-D-manno-heptose from D-glycero-beta-D-manno-heptose 7-phosphate: step 3/4. In terms of biological role, catalyzes the phosphorylation of D-glycero-D-manno-heptose 7-phosphate at the C-1 position to selectively form D-glycero-beta-D-manno-heptose-1,7-bisphosphate. Catalyzes the ADP transfer from ATP to D-glycero-beta-D-manno-heptose 1-phosphate, yielding ADP-D-glycero-beta-D-manno-heptose. The polypeptide is Bifunctional protein HldE (Salmonella arizonae (strain ATCC BAA-731 / CDC346-86 / RSK2980)).